The chain runs to 89 residues: Small ribosomal subunit protein uS15 (89 aa).

The protein belongs to the universal ribosomal protein uS15 family. In terms of assembly, part of the 30S ribosomal subunit. Forms a bridge to the 50S subunit in the 70S ribosome, contacting the 23S rRNA.

In terms of biological role, one of the primary rRNA binding proteins, it binds directly to 16S rRNA where it helps nucleate assembly of the platform of the 30S subunit by binding and bridging several RNA helices of the 16S rRNA. Forms an intersubunit bridge (bridge B4) with the 23S rRNA of the 50S subunit in the ribosome. In Streptococcus pneumoniae (strain P1031), this protein is Small ribosomal subunit protein uS15.